The sequence spans 503 residues: 3-octaprenyl-4-hydroxybenzoate carboxy-lyase (503 aa).

N176 serves as a coordination point for Mn(2+). Prenylated FMN-binding positions include 179 to 181, 193 to 195, and 198 to 199; these read IYR, RWL, and RG. E242 serves as a coordination point for Mn(2+). D303 (proton donor) is an active-site residue.

This sequence belongs to the UbiD family. In terms of assembly, homohexamer. It depends on prenylated FMN as a cofactor. The cofactor is Mn(2+).

It localises to the cell membrane. It carries out the reaction a 4-hydroxy-3-(all-trans-polyprenyl)benzoate + H(+) = a 2-(all-trans-polyprenyl)phenol + CO2. Its pathway is cofactor biosynthesis; ubiquinone biosynthesis. Its function is as follows. Catalyzes the decarboxylation of 3-octaprenyl-4-hydroxy benzoate to 2-octaprenylphenol, an intermediate step in ubiquinone biosynthesis. In Ralstonia pickettii (strain 12J), this protein is 3-octaprenyl-4-hydroxybenzoate carboxy-lyase.